The primary structure comprises 414 residues: 2-acylphloroglucinol 4-prenyltransferase (414 aa).

The transit peptide at 1–86 (MELSSVSSFS…LKPLSIFSCK (86 aa)) directs the protein to the chloroplast. The next 8 helical transmembrane spans lie at 153–173 (FSWPLIFRALLGMLAILGSCF), 201–221 (ISVESAWLLTLSPAIIGFILI), 229–249 (LLTSLYCLAILSGTIYSVPPF), 256–276 (ITAFLCILMIHAGLNFSVYYA), 281–301 (LGLAFVWSPSFSFITAFITFM), 336–356 (LLGTGLLLLNYVAAISTAIIW), 359–379 (AFKSNIMLLSHAILAFSLFFQ), and 394–414 (KSFYEFIWILFSAEYVVYLFI).

Belongs to the UbiA prenyltransferase family. In terms of assembly, component an active demethylxanthohumol (DMX) biosynthetic metabolon in glandular trichomes (lupulin glands) that encompasses a chalcone synthase (CHS) and a membrane-bound prenyltransferase. Interacts with PT2, forming a functional metabolon. Interacts with CHIL2; this interaction promotes catalytic activity. Mg(2+) serves as cofactor. In terms of tissue distribution, expressed in trichomes.

The protein localises to the plastid. The protein resides in the chloroplast membrane. It carries out the reaction 2',4,4',6'-tetrahydroxychalcone + dimethylallyl diphosphate = desmethylxanthohumol + diphosphate. The enzyme catalyses a 2-acylphloroglucinol + dimethylallyl diphosphate = a 2-acyl-4-prenylphloroglucinol + diphosphate. The protein operates within secondary metabolite biosynthesis. With respect to regulation, stimulated by CHIL2 but inhibited by CHIL1. In terms of biological role, involved in the biosynthesis of prenylated phenolics natural products which contribute to the bitter taste of beer and display broad biological activities. Catalyzes the first prenylation step in the beta-bitter acid pathway. Uses dimethylallyl diphosphate (DMAPP) as the prenyl donor. The protein is 2-acylphloroglucinol 4-prenyltransferase of Humulus lupulus (European hop).